A 331-amino-acid chain; its full sequence is L-lactate dehydrogenase A chain (331 aa).

NAD(+) is bound by residues 29 to 57 (GMVG…MEDK) and R98. Residues R105, N137, and R168 each coordinate substrate. Residue N137 coordinates NAD(+). H192 (proton acceptor) is an active-site residue. Position 247 (T247) interacts with substrate.

This sequence belongs to the LDH/MDH superfamily. LDH family. Homotetramer.

It localises to the cytoplasm. It carries out the reaction (S)-lactate + NAD(+) = pyruvate + NADH + H(+). It participates in fermentation; pyruvate fermentation to lactate; (S)-lactate from pyruvate: step 1/1. Interconverts simultaneously and stereospecifically pyruvate and lactate with concomitant interconversion of NADH and NAD(+). The protein is L-lactate dehydrogenase A chain (ldha) of Harpagifer antarcticus (Antarctic spiny plunderfish).